The sequence spans 407 residues: Proteasomal ubiquitin receptor ADRM1 (407 aa).

Residue Thr2 is modified to N-acetylthreonine. A Phosphoserine modification is found at Ser15. In terms of domain architecture, Pru spans 18-131; it reads ASNKYLVEFR…RKVNEYLNNP (114 aa). Lys34 participates in a covalent cross-link: Glycyl lysine isopeptide (Lys-Gly) (interchain with G-Cter in ubiquitin). Tyr127 bears the Phosphotyrosine mark. Phosphoserine occurs at positions 140 and 211. Disordered regions lie at residues 194–259 and 379–407; these read LLGS…ASPT and KAMQ…MSLD. A Phosphothreonine modification is found at Thr217. Residues 253-407 form an interaction with UCHL5 region; that stretch reads STAASPTQPI…KDEEEDMSLD (155 aa). The 115-residue stretch at 277–391 folds into the DEUBAD domain; the sequence is PAGPAGGQQV…QNNAKPEQKE (115 aa). Positions 387–398 are enriched in basic and acidic residues; the sequence is PEQKEGDTKDKK. Position 405 is a phosphoserine (Ser405).

The protein belongs to the ADRM1 family. Component of the 19S proteasome regulatory particle complex. The 26S proteasome consists of a 20S core particle (CP) and two 19S regulatory subunits (RP). Interacts with the proteasomal scaffolding protein PSMD1. Interacts with deubiquitinase UCHL5; this interaction activates the auto-inhibited UCHL5 by deoligomerizing it. Interacts with UBQLN2 and ubiquitin. Post-translationally, ubiquitinated by UBE3C in response to proteotoxic stress.

The protein localises to the cytoplasm. It localises to the nucleus. Its function is as follows. Component of the 26S proteasome, a multiprotein complex involved in the ATP-dependent degradation of ubiquitinated proteins. This complex plays a key role in the maintenance of protein homeostasis by removing misfolded or damaged proteins, which could impair cellular functions, and by removing proteins whose functions are no longer required. Therefore, the proteasome participates in numerous cellular processes, including cell cycle progression, apoptosis, or DNA damage repair. Within the complex, functions as a proteasomal ubiquitin receptor. Engages and activates 19S-associated deubiquitinases UCHL5 and PSMD14 during protein degradation. UCHL5 reversibly associate with the 19S regulatory particle whereas PSMD14 is an intrinsic subunit of the proteasome lid subcomplex. The sequence is that of Proteasomal ubiquitin receptor ADRM1 (ADRM1) from Homo sapiens (Human).